Consider the following 164-residue polypeptide: Ribosome maturation factor RimP (164 aa).

Belongs to the RimP family.

It is found in the cytoplasm. Required for maturation of 30S ribosomal subunits. This chain is Ribosome maturation factor RimP, found in Mesoplasma florum (strain ATCC 33453 / NBRC 100688 / NCTC 11704 / L1) (Acholeplasma florum).